Here is a 286-residue protein sequence, read N- to C-terminus: tRNA (guanine-N(7)-)-methyltransferase (286 aa).

A disordered region spans residues 1 to 22; sequence MGRARPKSQKRGDYRVSRSQEN. Residues glycine 104, 127–128, 162–163, and cysteine 182 contribute to the S-adenosyl-L-methionine site; these read EI and NS. Residue aspartate 185 is part of the active site. Residue 260 to 262 participates in S-adenosyl-L-methionine binding; the sequence is TEE.

This sequence belongs to the class I-like SAM-binding methyltransferase superfamily. TrmB family. As to quaternary structure, forms a complex with TRM82.

It localises to the nucleus. The enzyme catalyses guanosine(46) in tRNA + S-adenosyl-L-methionine = N(7)-methylguanosine(46) in tRNA + S-adenosyl-L-homocysteine. The protein operates within tRNA modification; N(7)-methylguanine-tRNA biosynthesis. Its function is as follows. Catalyzes the formation of N(7)-methylguanine at position 46 (m7G46) in tRNA. This Colletotrichum orbiculare (strain 104-T / ATCC 96160 / CBS 514.97 / LARS 414 / MAFF 240422) (Cucumber anthracnose fungus) protein is tRNA (guanine-N(7)-)-methyltransferase.